The following is a 206-amino-acid chain: ATP-dependent Clp protease proteolytic subunit (206 aa).

Residue S110 is the Nucleophile of the active site. The active site involves H135.

This sequence belongs to the peptidase S14 family. As to quaternary structure, fourteen ClpP subunits assemble into 2 heptameric rings which stack back to back to give a disk-like structure with a central cavity, resembling the structure of eukaryotic proteasomes.

The protein resides in the cytoplasm. The enzyme catalyses Hydrolysis of proteins to small peptides in the presence of ATP and magnesium. alpha-casein is the usual test substrate. In the absence of ATP, only oligopeptides shorter than five residues are hydrolyzed (such as succinyl-Leu-Tyr-|-NHMec, and Leu-Tyr-Leu-|-Tyr-Trp, in which cleavage of the -Tyr-|-Leu- and -Tyr-|-Trp bonds also occurs).. Its function is as follows. Cleaves peptides in various proteins in a process that requires ATP hydrolysis. Has a chymotrypsin-like activity. Plays a major role in the degradation of misfolded proteins. This chain is ATP-dependent Clp protease proteolytic subunit, found in Edwardsiella ictaluri (strain 93-146).